A 430-amino-acid chain; its full sequence is Enolase (430 aa).

Position 163 (glutamine 163) interacts with (2R)-2-phosphoglycerate. Glutamate 205 (proton donor) is an active-site residue. The Mg(2+) site is built by aspartate 242, glutamate 285, and aspartate 312. The (2R)-2-phosphoglycerate site is built by lysine 337, arginine 366, serine 367, and lysine 388. Lysine 337 (proton acceptor) is an active-site residue.

Belongs to the enolase family. Requires Mg(2+) as cofactor.

Its subcellular location is the cytoplasm. It is found in the secreted. The protein resides in the cell surface. It carries out the reaction (2R)-2-phosphoglycerate = phosphoenolpyruvate + H2O. It participates in carbohydrate degradation; glycolysis; pyruvate from D-glyceraldehyde 3-phosphate: step 4/5. Functionally, catalyzes the reversible conversion of 2-phosphoglycerate (2-PG) into phosphoenolpyruvate (PEP). It is essential for the degradation of carbohydrates via glycolysis. The protein is Enolase of Rubrobacter xylanophilus (strain DSM 9941 / JCM 11954 / NBRC 16129 / PRD-1).